Here is a 599-residue protein sequence, read N- to C-terminus: Serine hydroxymethyltransferase 6 (599 aa).

Residues 1–25 form a disordered region; that stretch reads MDRIAQSDLSLGFGSSHALPLPHPP. Lysine 374 is modified (N6-(pyridoxal phosphate)lysine).

This sequence belongs to the SHMT family. Homotetramer. Pyridoxal 5'-phosphate is required as a cofactor.

It is found in the cytoplasm. The catalysed reaction is (6R)-5,10-methylene-5,6,7,8-tetrahydrofolate + glycine + H2O = (6S)-5,6,7,8-tetrahydrofolate + L-serine. It participates in one-carbon metabolism; tetrahydrofolate interconversion. Its function is as follows. Catalyzes the interconversion of serine and glycine. The sequence is that of Serine hydroxymethyltransferase 6 (SHM6) from Arabidopsis thaliana (Mouse-ear cress).